The following is a 235-amino-acid chain: Orotidine 5'-phosphate decarboxylase (235 aa).

Residues Asp-17, Lys-39, 66-75, Thr-121, Arg-182, Gln-191, Gly-211, and Arg-212 contribute to the substrate site; that span reads DLKLHDIGNT. Lys-68 (proton donor) is an active-site residue.

It belongs to the OMP decarboxylase family. Type 1 subfamily. As to quaternary structure, homodimer.

It carries out the reaction orotidine 5'-phosphate + H(+) = UMP + CO2. The protein operates within pyrimidine metabolism; UMP biosynthesis via de novo pathway; UMP from orotate: step 2/2. Catalyzes the decarboxylation of orotidine 5'-monophosphate (OMP) to uridine 5'-monophosphate (UMP). This is Orotidine 5'-phosphate decarboxylase from Rhodopseudomonas palustris (strain HaA2).